We begin with the raw amino-acid sequence, 826 residues long: Protein lozenge (826 aa).

Disordered regions lie at residues 1–45 (MHLH…ASQT), 87–171 (PVSV…WSSS), and 214–263 (ASVG…NNNN). Over residues 12-24 (PPSPSPNPTPTPS) the composition is skewed to pro residues. Over residues 106–141 (SHHHHHLHHHYSPYHHAHPYHPPHPHAPHHHHHHHP) the composition is skewed to basic residues. The segment covering 142 to 153 (PYPYPPAGPHPP) has biased composition (pro residues). Positions 156–171 (VTSSSTSPTGNGWSSS) are enriched in polar residues. Positions 275–403 (LVQKRQQEHP…TVDGPREPRS (129 aa)) constitute a Runt domain. Residues 774 to 798 (QQQQQQQQQQQQVHHPQQQQVESAG) are compositionally biased toward low complexity. Residues 774–826 (QQQQQQQQQQQQVHHPQQQQVESAGEVGGSGAGGVESAREEDVGDLSQVWRPY) are disordered.

Expressed in the pupal eye during programmed cell death.

Its subcellular location is the nucleus. Involved in prepatterning photoreceptor precursors in the developing eye; in the larval eye disk it defines a subset of cells as an equipotential group that is competent to respond to the sevenless developmental signal and another subset that confer proper photoreceptor identity by positively regulating the homeo box gene Bar. Involved in the aop/pnt dynamic in a Ras-dependent manner to regulate pros expression. Promotes apoptosis in the pupal eye by directly activating aos and klu. Also modulates hid- and rpr-mediated cell death. Regulates amos function in olfactory sensilla development. The polypeptide is Protein lozenge (lz) (Drosophila melanogaster (Fruit fly)).